A 561-amino-acid polypeptide reads, in one-letter code: Putative transport protein YbjL (561 aa).

Transmembrane regions (helical) follow at residues 8–28 (LLNGNYILLLFVVLALGLCLG), 32–52 (LGSVQLGNSIGVLVVSLLLGQ), 66–86 (FMLFIFCVGVEAGPNFFSIFF), 94–114 (MLALVMVGSALLIALGLGKLF), and 158–178 (NLSLGYALTYLIGLVSLIVGA). RCK C-terminal domains are found at residues 200-288 (RGLD…SFRN) and 292-373 (VFDR…RIGF). 5 helical membrane passes run 383–403 (LLAFCAFFIIGLMIGMITFQF), 406–426 (FSFGIGNAAGLLFAGIMLGFL), 447–467 (FGLMVFMAGVGLSAGSGISNG), 475–495 (MLIAGLVVSLVPVVICFLFGA), and 540–560 (AIANVLLTLAGTLIVIIWPGL).

Belongs to the AAE transporter (TC 2.A.81) family. YbjL subfamily.

It is found in the cell membrane. The chain is Putative transport protein YbjL from Salmonella agona (strain SL483).